We begin with the raw amino-acid sequence, 147 residues long: Hemoglobin subunit beta (147 aa).

Valine 2 is modified (N-acetylvaline). In terms of domain architecture, Globin spans 3–147 (HLTGEEKSAV…VANALAHKYH (145 aa)). At threonine 13 the chain carries Phosphothreonine. Serine 45 bears the Phosphoserine mark. Position 60 is an N6-acetyllysine (lysine 60). Histidine 64 provides a ligand contact to heme b. N6-acetyllysine is present on lysine 83. Histidine 93 lines the heme b pocket. An S-nitrosocysteine modification is found at cysteine 94. Lysine 145 is subject to N6-acetyllysine.

The protein belongs to the globin family. As to quaternary structure, heterotetramer of two alpha chains and two beta chains. As to expression, red blood cells.

Functionally, involved in oxygen transport from the lung to the various peripheral tissues. The chain is Hemoglobin subunit beta (HBB) from Callithrix jacchus (White-tufted-ear marmoset).